A 242-amino-acid chain; its full sequence is Pyr4-family terpene cyclase mfmH (242 aa).

The next 4 helical transmembrane spans lie at 25 to 45, 55 to 75, 80 to 100, and 116 to 136; these read VQDG…ILYI, GMPL…GAAI, AQVV…YTTW, and NLGW…WAFL. N170 carries an N-linked (GlcNAc...) asparagine glycan. The next 2 membrane-spanning stretches (helical) occupy residues 175–195 and 211–231; these read SWGI…IFVW and VTIF…FVYA.

It belongs to the paxB family.

Its subcellular location is the membrane. It participates in secondary metabolite biosynthesis; terpenoid biosynthesis. In terms of biological role, terpene cyclase; part of the gene cluster that mediates the biosynthesis of the phthalide-terpenoid hybrid 11'-O-desmethylfendlerol. Within the pathway, mfmH catalyzes the last step and cyclizes the prenyl unit of 5-O-farnesylcyclopolic acid into a drimane-like structure to yield 11'-O-desmethylfendlerol. The biosynthesis of 11'-O-desmethylfendlerol begins with the NR-PKS mfmB that forms 3,5-dimethylorsellinic acid (DMOA), which is then transformed into the phthalide 5,7-dihydroxy-4-(hydroxymethyl)-6-methylphthalide by the cytochrome P450 monooxygenase mfmA and the hydrolase mfmC. Subsequently, the methyltransferase mfmE catalyzes 7-O-methylation to yield 5-hydroxy-4-(hydroxymethyl)-7-methoxy-6-methylphthalide, which undergoes C-3 hydroxylation by the cytochrome P450 monooxygenase mfmF. The resultant cyclopolic acid (2,5-dihydroxy-4-(hydroxymethyl)-7-methoxy-6-methylphthalide) is then farnesylated by the DMATS-type prenyltransferase mfmD to afford 5-O-farnesylcyclopolic acid. Finally, the Pyr4-family terpene cyclase mfmH cyclizes the farnesyl moiety of 5-O-farnesylcyclopolic acid into a drimane-like structure, thus completing the biosynthesis of 11'-O-desmethylfendlerol. This Annulohypoxylon moriforme (Filamentous fungus) protein is Pyr4-family terpene cyclase mfmH.